A 428-amino-acid chain; its full sequence is Immunoglobulin superfamily member 11 (428 aa).

Positions 1-22 (MTRRRSALASWLLLSLLGVAAS) are cleaved as a signal peptide. The Ig-like V-type domain maps to 23–136 (LEVSESPGSV…DRGGRNIGVT (114 aa)). The Extracellular segment spans residues 23–239 (LEVSESPGSV…LQVISPQPRS (217 aa)). Disulfide bonds link cysteine 44/cysteine 120 and cysteine 165/cysteine 215. N-linked (GlcNAc...) asparagine glycosylation occurs at asparagine 102. The Ig-like C2-type domain maps to 144–234 (PSAPNCQIQG…TCLLDLQVIS (91 aa)). A helical transmembrane segment spans residues 240 to 260 (VGVIAGAVGTGAVLIVICLAL). Residues 261–428 (TSGAFFYWRS…PAQSRAGSLV (168 aa)) lie on the Cytoplasmic side of the membrane. Position 375 is an omega-N-methylarginine (arginine 375).

Post-translationally, N-glycosylated.

Its subcellular location is the cell membrane. Functions as a cell adhesion molecule through homophilic interaction. Stimulates cell growth. This is Immunoglobulin superfamily member 11 (Igsf11) from Rattus norvegicus (Rat).